The chain runs to 258 residues: Acyl-[acyl-carrier-protein]--UDP-N-acetylglucosamine O-acyltransferase (258 aa).

This sequence belongs to the transferase hexapeptide repeat family. LpxA subfamily. Homotrimer.

It localises to the cytoplasm. It carries out the reaction a (3R)-hydroxyacyl-[ACP] + UDP-N-acetyl-alpha-D-glucosamine = a UDP-3-O-[(3R)-3-hydroxyacyl]-N-acetyl-alpha-D-glucosamine + holo-[ACP]. Its pathway is glycolipid biosynthesis; lipid IV(A) biosynthesis; lipid IV(A) from (3R)-3-hydroxytetradecanoyl-[acyl-carrier-protein] and UDP-N-acetyl-alpha-D-glucosamine: step 1/6. Involved in the biosynthesis of lipid A, a phosphorylated glycolipid that anchors the lipopolysaccharide to the outer membrane of the cell. The sequence is that of Acyl-[acyl-carrier-protein]--UDP-N-acetylglucosamine O-acyltransferase from Neisseria meningitidis serogroup C / serotype 2a (strain ATCC 700532 / DSM 15464 / FAM18).